We begin with the raw amino-acid sequence, 68 residues long: UPF0253 protein ASA_2184 (68 aa).

The protein belongs to the UPF0253 family.

This is UPF0253 protein ASA_2184 from Aeromonas salmonicida (strain A449).